A 605-amino-acid polypeptide reads, in one-letter code: Elongation factor 4 (605 aa).

The tr-type G domain maps to 9 to 192 (CRIRNFCIIA…SIVHRIPPPA (184 aa)). GTP is bound by residues 21 to 26 (DHGKST) and 139 to 142 (NKID).

The protein belongs to the TRAFAC class translation factor GTPase superfamily. Classic translation factor GTPase family. LepA subfamily.

The protein resides in the cell inner membrane. The enzyme catalyses GTP + H2O = GDP + phosphate + H(+). Its function is as follows. Required for accurate and efficient protein synthesis under certain stress conditions. May act as a fidelity factor of the translation reaction, by catalyzing a one-codon backward translocation of tRNAs on improperly translocated ribosomes. Back-translocation proceeds from a post-translocation (POST) complex to a pre-translocation (PRE) complex, thus giving elongation factor G a second chance to translocate the tRNAs correctly. Binds to ribosomes in a GTP-dependent manner. This chain is Elongation factor 4, found in Chlorobium chlorochromatii (strain CaD3).